A 331-amino-acid polypeptide reads, in one-letter code: MSTKEKLISHVMKEEPVGSRNKVTVVGVGMVGMASAISILLKDLCDELAMVDVMEDKLKGEVMDLQHGSLFLKTKIVGDKDYSVTANSKVVVVTAGARQQEGESRLNLVQRNVNIFKFIIPNIVKYSPNCILMVVSNPVDILTYVAWKLSGFPRNRVIGSGTNLDSARFRHLIGEKLHLHPSSCHAWIVGEHGDSSVPVWSGVNVAGVSLQGLNPQMGTEGDGENWKAIHKEVVDGAYEVIKLKGYTSWAIGMSVADLVESIIKNMHKVHPVSTLVQGMHGVKDEVFLSVPSVLGNSGLTDVIHMTLKAEEEKQLQKSAETLWGVQKELVL.

NAD(+)-binding positions include 29-57 (GMVGMASAISILLKDLCDELAMVDVMEDK) and Arg98. Substrate contacts are provided by Arg105, Asn137, and Arg168. Asn137 contributes to the NAD(+) binding site. His192 acts as the Proton acceptor in catalysis. Thr247 is a substrate binding site.

This sequence belongs to the LDH/MDH superfamily. LDH family. As to quaternary structure, homotetramer.

The protein resides in the cytoplasm. It catalyses the reaction (S)-lactate + NAD(+) = pyruvate + NADH + H(+). It functions in the pathway fermentation; pyruvate fermentation to lactate; (S)-lactate from pyruvate: step 1/1. In terms of biological role, interconverts simultaneously and stereospecifically pyruvate and lactate with concomitant interconversion of NADH and NAD(+). This Dissostichus mawsoni (Antarctic cod) protein is L-lactate dehydrogenase A chain (ldha).